A 321-amino-acid chain; its full sequence is Protein-L-histidine N-pros-methyltransferase (321 aa).

A signal peptide spans 1 to 24 (MRLWLCWLGCYTLLLWALRRRMWA). N-linked (GlcNAc...) asparagine glycosylation occurs at Asn-89. 3 residues coordinate S-adenosyl-L-homocysteine: Glu-177, Asn-213, and Tyr-298.

It belongs to the METTL9 family.

The protein localises to the endoplasmic reticulum. It localises to the mitochondrion. It catalyses the reaction L-histidyl-[protein] + S-adenosyl-L-methionine = N(pros)-methyl-L-histidyl-[protein] + S-adenosyl-L-homocysteine + H(+). Protein-histidine N-methyltransferase that specifically catalyzes 1-methylhistidine (pros-methylhistidine) methylation of target proteins. Mediates methylation of proteins with a His-x-His (HxH) motif (where 'x' is preferably a small amino acid); 1-methylhistidine modification may affect the binding of zinc and other metals to its target proteins. The protein is Protein-L-histidine N-pros-methyltransferase of Gallus gallus (Chicken).